The following is a 214-amino-acid chain: Hypoxanthine-guanine phosphoribosyltransferase (214 aa).

N-acetylalanine is present on A2. A GMP-binding site is contributed by K69. At K103 the chain carries N6-acetyllysine. A Glycyl lysine isopeptide (Lys-Gly) (interchain with G-Cter in SUMO1); alternate cross-link involves residue K115. K115 is covalently cross-linked (Glycyl lysine isopeptide (Lys-Gly) (interchain with G-Cter in SUMO2); alternate). GMP is bound by residues 134 to 142 (EDIIDTGKT), K166, 186 to 188 (KFV), and D194. The Proton acceptor role is filled by D138. T142 carries the phosphothreonine modification. D194 serves as a coordination point for Mg(2+).

The protein belongs to the purine/pyrimidine phosphoribosyltransferase family. As to quaternary structure, homotetramer. Requires Mg(2+) as cofactor.

It is found in the cytoplasm. It catalyses the reaction IMP + diphosphate = hypoxanthine + 5-phospho-alpha-D-ribose 1-diphosphate. The catalysed reaction is GMP + diphosphate = guanine + 5-phospho-alpha-D-ribose 1-diphosphate. The protein operates within purine metabolism; IMP biosynthesis via salvage pathway; IMP from hypoxanthine: step 1/1. Its function is as follows. Converts guanine to guanosine monophosphate, and hypoxanthine to inosine monophosphate. Transfers the 5-phosphoribosyl group from 5-phosphoribosylpyrophosphate onto the purine. Plays a central role in the generation of purine nucleotides through the purine salvage pathway. In Mus spretus (Western Mediterranean mouse), this protein is Hypoxanthine-guanine phosphoribosyltransferase (Hprt1).